The primary structure comprises 290 residues: Probable ATP-dependent kinase TDA10 (290 aa).

38 to 45 (GPQGSGKS) provides a ligand contact to ATP.

It belongs to the GLYK kinase family.

The protein localises to the cytoplasm. Its subcellular location is the nucleus. In terms of biological role, ATP-dependent kinase whose specificity is not yet known. The sequence is that of Probable ATP-dependent kinase TDA10 (TDA10) from Saccharomyces cerevisiae (strain ATCC 204508 / S288c) (Baker's yeast).